Reading from the N-terminus, the 661-residue chain is UvrABC system protein B (661 aa).

The Helicase ATP-binding domain occupies 26–181 (KGIQEGRKHQ…LLRKLVDIQY (156 aa)). 39 to 46 (GATGTGKT) lines the ATP pocket. Residues 92–115 (YYDYYQPEAYVPQTDTFIEKDASI) carry the Beta-hairpin motif. Positions 430–596 (QIDDLIGEIQ…TINKEIRDVI (167 aa)) constitute a Helicase C-terminal domain. The UVR domain maps to 625 to 660 (QKVVEQMEHEMKEAARALDFERAAELRDLLLELKAE).

Belongs to the UvrB family. In terms of assembly, forms a heterotetramer with UvrA during the search for lesions. Interacts with UvrC in an incision complex.

The protein localises to the cytoplasm. Its function is as follows. The UvrABC repair system catalyzes the recognition and processing of DNA lesions. A damage recognition complex composed of 2 UvrA and 2 UvrB subunits scans DNA for abnormalities. Upon binding of the UvrA(2)B(2) complex to a putative damaged site, the DNA wraps around one UvrB monomer. DNA wrap is dependent on ATP binding by UvrB and probably causes local melting of the DNA helix, facilitating insertion of UvrB beta-hairpin between the DNA strands. Then UvrB probes one DNA strand for the presence of a lesion. If a lesion is found the UvrA subunits dissociate and the UvrB-DNA preincision complex is formed. This complex is subsequently bound by UvrC and the second UvrB is released. If no lesion is found, the DNA wraps around the other UvrB subunit that will check the other stand for damage. The protein is UvrABC system protein B of Bacillus velezensis (strain DSM 23117 / BGSC 10A6 / LMG 26770 / FZB42) (Bacillus amyloliquefaciens subsp. plantarum).